Reading from the N-terminus, the 180-residue chain is Beta-lactoglobulin-1/B (180 aa).

The N-terminal stretch at 1 to 18 (MKCLLLALGLALACGVQA) is a signal peptide. Intrachain disulfides connect C84/C178, C124/C137, and C124/C139.

Belongs to the calycin superfamily. Lipocalin family. As to quaternary structure, under physiological conditions beta-lactoglobulin exists as an equilibrium mixture of monomeric and dimeric forms. In terms of processing, alternate disulfide bonds occur in equal amounts.

It localises to the secreted. In terms of biological role, lactoglobulin is the primary component of whey, it binds retinol and is probably involved in the transport of that molecule. The protein is Beta-lactoglobulin-1/B of Ovis aries (Sheep).